The primary structure comprises 485 residues: E3 ubiquitin-protein ligase RNF14 (485 aa).

Positions 11–137 (DELLALASIY…QFLKEETLTY (127 aa)) constitute an RWD domain. A D-box motif is present at residues 37–45 (RIYLDLPQN). Residues 217-458 (KLFLCSICFC…DSESPCFNRL (242 aa)) form a TRIAD supradomain region. The Zn(2+) site is built by Cys221, Cys224, Cys239, His241, Cys244, Cys247, Cys266, Cys271, Cys310, Cys315, Cys330, Cys333, Cys338, Cys341, and His346. The RING-type 1 zinc-finger motif lies at 221–271 (CSICFCEKLGSDCMYFLECKHVYCKACLKDYFEIQIKDGQVKCLNCPEPQC). The IBR-type zinc finger occupies 290–351 (ARYDRLLLQS…RLTYHGLSPC (62 aa)). Ser349 carries the phosphoserine modification. Residues Cys351, Cys405, and Cys408 each contribute to the Zn(2+) site. An RING-type 2; atypical zinc finger spans residues 405–434 (CPCCGTPIQKLDGCNKMTCTGCMQYFCWIC). Residue Cys418 is part of the active site. Residues Cys423, Cys426, Cys431, Cys434, His446, and Cys454 each coordinate Zn(2+).

Belongs to the RBR family. RNF14 subfamily. In terms of assembly, interacts with GCN1; interaction takes place in response to ribosome collisions and is required for ubiquitination of EEF1A1/eEF1A. Interacts with the ubiquitin-conjugating enzymes UBE2E1 and UBE2E2. Interacts with AR/androgen receptor. Interacts with TCF7/TCF1, TCF7L1/TCF3 and TCF7L2/TCF4; promoting Wnt signaling. Post-translationally, RING-type zinc finger-dependent and UBE2E2-dependent autoubiquitination.

It localises to the cytoplasm. It is found in the nucleus. It carries out the reaction [E2 ubiquitin-conjugating enzyme]-S-ubiquitinyl-L-cysteine + [acceptor protein]-L-lysine = [E2 ubiquitin-conjugating enzyme]-L-cysteine + [acceptor protein]-N(6)-ubiquitinyl-L-lysine.. Its pathway is protein modification; protein ubiquitination. Functionally, E3 ubiquitin-protein ligase that plays a key role in the RNF14-RNF25 translation quality control pathway, a pathway that takes place when a ribosome has stalled during translation, and which promotes ubiquitination and degradation of translation factors on stalled ribosomes. Recruited to stalled ribosomes by the ribosome collision sensor GCN1 and mediates 'Lys-6'-linked ubiquitination of target proteins, leading to their degradation. Mediates ubiquitination of EEF1A1/eEF1A and ETF1/eRF1 translation factors on stalled ribosomes, leading to their degradation. Also catalyzes ubiquitination of ribosomal proteins RPL0, RPL1, RPL12, RPS13 and RPS17. Specifically required to resolve RNA-protein cross-links caused by reactive aldehydes, which trigger translation stress by stalling ribosomes: acts by catalying 'Lys-6'-linked ubiquitination of RNA-protein cross-links, leading to their removal by the ATP-dependent unfoldase VCP and subsequent degradation by the proteasome. Independently of its function in the response to stalled ribosomes, acts as a regulator of transcription in Wnt signaling via its interaction with TCF transcription factors (TCF7/TCF1, TCF7L1/TCF3 and TCF7L2/TCF4). May also play a role as a coactivator for androgen- and, to a lesser extent, progesterone-dependent transcription. In Mus musculus (Mouse), this protein is E3 ubiquitin-protein ligase RNF14.